The sequence spans 269 residues: Type II methyltransferase M2.LlaDCHI (269 aa).

It belongs to the N(4)/N(6)-methyltransferase family.

The enzyme catalyses a 2'-deoxyadenosine in DNA + S-adenosyl-L-methionine = an N(6)-methyl-2'-deoxyadenosine in DNA + S-adenosyl-L-homocysteine + H(+). Its function is as follows. A beta subtype methylase, recognizes the double-stranded sequence 5'-GATC-3', methylates A-2 on both strands, and protects the DNA from cleavage by the LlaDCHI endonuclease. The chain is Type II methyltransferase M2.LlaDCHI from Lactococcus lactis subsp. cremoris (Streptococcus cremoris).